The primary structure comprises 298 residues: Acetylglutamate kinase (298 aa).

Residues 69–70, arginine 91, and asparagine 191 each bind substrate; that span reads GG.

This sequence belongs to the acetylglutamate kinase family. ArgB subfamily.

Its subcellular location is the cytoplasm. It catalyses the reaction N-acetyl-L-glutamate + ATP = N-acetyl-L-glutamyl 5-phosphate + ADP. Its pathway is amino-acid biosynthesis; L-arginine biosynthesis; N(2)-acetyl-L-ornithine from L-glutamate: step 2/4. Catalyzes the ATP-dependent phosphorylation of N-acetyl-L-glutamate. The sequence is that of Acetylglutamate kinase from Neisseria gonorrhoeae (strain ATCC 700825 / FA 1090).